Consider the following 123-residue polypeptide: Large ribosomal subunit protein bL12 (123 aa).

The protein belongs to the bacterial ribosomal protein bL12 family. Homodimer. Part of the ribosomal stalk of the 50S ribosomal subunit. Forms a multimeric L10(L12)X complex, where L10 forms an elongated spine to which 2 to 4 L12 dimers bind in a sequential fashion. Binds GTP-bound translation factors.

In terms of biological role, forms part of the ribosomal stalk which helps the ribosome interact with GTP-bound translation factors. Is thus essential for accurate translation. The chain is Large ribosomal subunit protein bL12 from Mycoplasmopsis agalactiae (strain NCTC 10123 / CIP 59.7 / PG2) (Mycoplasma agalactiae).